A 317-amino-acid polypeptide reads, in one-letter code: tRNA dimethylallyltransferase (317 aa).

21–28 (GPTASGKS) is a binding site for ATP. 23–28 (TASGKS) is a binding site for substrate. Residues 46-49 (DSMQ) are interaction with substrate tRNA.

The protein belongs to the IPP transferase family. As to quaternary structure, monomer. Mg(2+) is required as a cofactor.

It catalyses the reaction adenosine(37) in tRNA + dimethylallyl diphosphate = N(6)-dimethylallyladenosine(37) in tRNA + diphosphate. Functionally, catalyzes the transfer of a dimethylallyl group onto the adenine at position 37 in tRNAs that read codons beginning with uridine, leading to the formation of N6-(dimethylallyl)adenosine (i(6)A). This Nitrobacter hamburgensis (strain DSM 10229 / NCIMB 13809 / X14) protein is tRNA dimethylallyltransferase.